We begin with the raw amino-acid sequence, 359 residues long: Phospho-N-acetylmuramoyl-pentapeptide-transferase (359 aa).

Over 1-25 (MLYQLALLLKDYWFAFNVLKYITFR) the chain is Periplasmic. A helical transmembrane segment spans residues 26-48 (SFTAVLIAFFLTLVLSPSFINRL). Over 49 to 74 (RKIQRLFGGYVREYTPESHEVKKYTP) the chain is Cytoplasmic. 2 residues coordinate muraymycin D2: K70 and T75. The chain crosses the membrane as a helical span at residues 75–92 (TMGGIVILIVVTLSTLLL). Topologically, residues 93–98 (MRWDIK) are periplasmic. The chain crosses the membrane as a helical span at residues 99-120 (YTWVVLLSFLSFGTIGFWDDYV). The Cytoplasmic segment spans residues 121–130 (KLKNKKGISI). A helical membrane pass occupies residues 131–152 (KTKFLLQVLSASLISVLIYYWA). Residues 153 to 172 (DIDTILYFPFFKELYVDLGV) are Periplasmic-facing. Residues 173 to 194 (LYLPFAVFVIVGSANAVNLTDG) form a helical membrane-spanning segment. Residues N190, D193, and D196 each coordinate muraymycin D2. Over 195–197 (LDG) the chain is Cytoplasmic. Residues 198–218 (LAIGPAMTTATALGVVAYAVG) form a helical membrane-spanning segment. The Periplasmic segment spans residues 219-233 (HSKIAQYLNIPYVPY). Residues 234 to 255 (AGELTVFCFALVGAGLGFLWFN) traverse the membrane as a helical segment. Residues 256 to 264 (SFPAQMFMG) are Cytoplasmic-facing. 2 residues coordinate muraymycin D2: G264 and S268. The chain crosses the membrane as a helical span at residues 265 to 280 (DVGSLSIGASLATVAL). The Periplasmic segment spans residues 281-284 (LTKS). The helical transmembrane segment at 285-310 (EFIFAVAAGVFVFETISVILQIIYFR) threads the bilayer. Muraymycin D2 contacts are provided by Q305 and A321. Topologically, residues 311–332 (WTGGKRLFKRAPFHHHLELNGL) are cytoplasmic. Residues 333-355 (PEPKIVVRMWIISILLAIIAISM) form a helical membrane-spanning segment. The Periplasmic segment spans residues 356-359 (LKLR).

It belongs to the glycosyltransferase 4 family. MraY subfamily. In terms of assembly, homodimer. Mg(2+) serves as cofactor. It depends on Mn(2+) as a cofactor.

It localises to the cell inner membrane. The enzyme catalyses UDP-N-acetyl-alpha-D-muramoyl-L-alanyl-gamma-D-glutamyl-meso-2,6-diaminopimeloyl-D-alanyl-D-alanine + di-trans,octa-cis-undecaprenyl phosphate = di-trans,octa-cis-undecaprenyl diphospho-N-acetyl-alpha-D-muramoyl-L-alanyl-D-glutamyl-meso-2,6-diaminopimeloyl-D-alanyl-D-alanine + UMP. Its pathway is cell wall biogenesis; peptidoglycan biosynthesis. Its activity is regulated as follows. Inhibited by natural nucleoside antibiotics including tunicamycin, capuramycin and muraymycin. Usually the cofactor magnesium is not required for antibiotic binding. Its function is as follows. Catalyzes the initial step of the lipid cycle reactions in the biosynthesis of the cell wall peptidoglycan: transfers peptidoglycan precursor phospho-MurNAc-pentapeptide from UDP-MurNAc-pentapeptide onto the lipid carrier undecaprenyl phosphate, yielding undecaprenyl-pyrophosphoryl-MurNAc-pentapeptide, known as lipid I. This is Phospho-N-acetylmuramoyl-pentapeptide-transferase from Aquifex aeolicus (strain VF5).